A 199-amino-acid chain; its full sequence is Desiccation stress protein DSP-22, chloroplastic (199 aa).

The transit peptide at 1-52 directs the protein to the chloroplast; that stretch reads MASSTCYATIPAMSCRGQSTITRFGPNNLFLGKQSYELPLMRRNAKFTVRSM. Over residues 53–62 the composition is skewed to basic and acidic residues; the sequence is REDNEKEEQQ. A disordered region spans residues 53–82; sequence REDNEKEEQQQQKQQQTHDGGPDLTPNRTE. 2 helical membrane-spanning segments follow: residues 130-152 and 172-191; these read FNGG…LIPI and IWNG…TEYV.

The protein belongs to the ELIP/psbS family. Preferentially localized in the chloroplast-rich palisade parenchyma cells, in extracts of desiccated leaves, in seeds, but not in roots or untreated leaves.

The protein localises to the plastid. The protein resides in the chloroplast thylakoid membrane. Its function is as follows. Possibly exerts a protective role during water loss. This chain is Desiccation stress protein DSP-22, chloroplastic (DSP-22), found in Craterostigma plantagineum (Blue gem).